The chain runs to 345 residues: UbiA prenyltransferase domain-containing protein 1 (345 aa).

The next 8 membrane-spanning stretches (helical) occupy residues 60 to 80 (LALRPWSFSASLIPVALGTAI), 90 to 110 (LLLFVVCAVAVLAVHGAGNLV), 141 to 161 (VRFGVFLYTLGCLCAACLYFI), 169 to 189 (LALIYFGGLSSSFLYTGGIGF), 213 to 233 (AVQVGYLAVTPLLYAVPLALS), 251 to 273 (QAGIVTLAILVGPMFSYMLYNLL), 285 to 305 (ATRYTISMALPLLTIPLAFSL), and 324 to 344 (LNLLVGLFYVFGIVLAPAGSL).

The protein belongs to the UbiA prenyltransferase family.

Its subcellular location is the endoplasmic reticulum membrane. It is found in the golgi apparatus membrane. The protein resides in the mitochondrion membrane. The enzyme catalyses menadiol + (2E,6E,10E)-geranylgeranyl diphosphate = menaquinol-4 + diphosphate. The catalysed reaction is all-trans-decaprenyl diphosphate + 4-hydroxybenzoate = 4-hydroxy-3-(all-trans-decaprenyl)benzoate + diphosphate. Its pathway is quinol/quinone metabolism; menaquinone biosynthesis. It participates in cofactor biosynthesis; ubiquinone biosynthesis. In terms of biological role, prenyltransferase that mediates the formation of menaquinone-4 (MK-4) and coenzyme Q10. MK-4 is a vitamin K2 isoform required for endothelial cell development. Mediates the conversion of phylloquinone (PK) into MK-4, probably by cleaving the side chain of phylloquinone (PK) to release 2-methyl-1,4-naphthoquinone (menadione; K3) and then prenylating it with geranylgeranyl pyrophosphate (GGPP) to form MK-4. Also plays a role in cardiovascular development independently of MK-4 biosynthesis, by acting as a coenzyme Q10 biosynthetic enzyme: coenzyme Q10, also named ubiquinone, plays an important antioxidant role in the cardiovascular system. Mediates biosynthesis of coenzyme Q10 in the Golgi membrane, leading to protect cardiovascular tissues from NOS3/eNOS-dependent oxidative stress. This is UbiA prenyltransferase domain-containing protein 1 (ubiad1) from Xenopus tropicalis (Western clawed frog).